Here is a 172-residue protein sequence, read N- to C-terminus: Large ribosomal subunit protein uL10 (172 aa).

This sequence belongs to the universal ribosomal protein uL10 family. As to quaternary structure, part of the ribosomal stalk of the 50S ribosomal subunit. The N-terminus interacts with L11 and the large rRNA to form the base of the stalk. The C-terminus forms an elongated spine to which L12 dimers bind in a sequential fashion forming a multimeric L10(L12)X complex.

Forms part of the ribosomal stalk, playing a central role in the interaction of the ribosome with GTP-bound translation factors. In Idiomarina loihiensis (strain ATCC BAA-735 / DSM 15497 / L2-TR), this protein is Large ribosomal subunit protein uL10.